The sequence spans 285 residues: Probable endonuclease 4 (285 aa).

Residues His-69, His-109, Glu-145, Asp-179, His-182, His-216, Asp-229, His-231, and Glu-261 each contribute to the Zn(2+) site.

Belongs to the AP endonuclease 2 family. Zn(2+) serves as cofactor.

It carries out the reaction Endonucleolytic cleavage to 5'-phosphooligonucleotide end-products.. In terms of biological role, endonuclease IV plays a role in DNA repair. It cleaves phosphodiester bonds at apurinic or apyrimidinic (AP) sites, generating a 3'-hydroxyl group and a 5'-terminal sugar phosphate. The chain is Probable endonuclease 4 from Escherichia coli (strain SMS-3-5 / SECEC).